Consider the following 133-residue polypeptide: ATP synthase epsilon chain, chloroplastic (133 aa).

The protein belongs to the ATPase epsilon chain family. In terms of assembly, F-type ATPases have 2 components, CF(1) - the catalytic core - and CF(0) - the membrane proton channel. CF(1) has five subunits: alpha(3), beta(3), gamma(1), delta(1), epsilon(1). CF(0) has three main subunits: a, b and c.

Its subcellular location is the plastid. The protein resides in the chloroplast thylakoid membrane. Functionally, produces ATP from ADP in the presence of a proton gradient across the membrane. The chain is ATP synthase epsilon chain, chloroplastic from Vitis vinifera (Grape).